The sequence spans 233 residues: Cytidylate kinase (233 aa).

15–23 (GPSGAGKSS) provides a ligand contact to ATP. The segment covering 183–200 (QRDRQDEGREHAPLKQAE) has biased composition (basic and acidic residues). The tract at residues 183-203 (QRDRQDEGREHAPLKQAEDAV) is disordered.

Belongs to the cytidylate kinase family. Type 1 subfamily.

It localises to the cytoplasm. It carries out the reaction CMP + ATP = CDP + ADP. It catalyses the reaction dCMP + ATP = dCDP + ADP. This chain is Cytidylate kinase, found in Geobacter sp. (strain M21).